Consider the following 156-residue polypeptide: Lipoprotein signal peptidase (156 aa).

The next 3 helical transmembrane spans lie at 5-25 (FFVV…TKQW), 63-83 (IEWQ…AIIA), and 90-110 (SNPY…GNLI). Residues D120 and D138 contribute to the active site. Residues 133-153 (AFNVADMGICVGAFFVCLAVY) traverse the membrane as a helical segment.

The protein belongs to the peptidase A8 family.

Its subcellular location is the cell inner membrane. The enzyme catalyses Release of signal peptides from bacterial membrane prolipoproteins. Hydrolyzes -Xaa-Yaa-Zaa-|-(S,diacylglyceryl)Cys-, in which Xaa is hydrophobic (preferably Leu), and Yaa (Ala or Ser) and Zaa (Gly or Ala) have small, neutral side chains.. Its pathway is protein modification; lipoprotein biosynthesis (signal peptide cleavage). Functionally, this protein specifically catalyzes the removal of signal peptides from prolipoproteins. This chain is Lipoprotein signal peptidase, found in Oleidesulfovibrio alaskensis (strain ATCC BAA-1058 / DSM 17464 / G20) (Desulfovibrio alaskensis).